Reading from the N-terminus, the 800-residue chain is Protein PET111, mitochondrial (800 aa).

This sequence to yeast YHR160C.

It localises to the mitochondrion matrix. In terms of biological role, required for translation of the mitochondrial gene for cytochrome c oxidase subunit II (COX2). The protein is Protein PET111, mitochondrial (PET111) of Saccharomyces cerevisiae (strain ATCC 204508 / S288c) (Baker's yeast).